The primary structure comprises 517 residues: Cytochrome P450 78A5 (517 aa).

A helical transmembrane segment spans residues 20–40; that stretch reads AFASVSLIIATVAFLLSPGGL. Cys459 serves as a coordination point for heme.

This sequence belongs to the cytochrome P450 family. The cofactor is heme. As to expression, expressed in the periphery of the shoot apical meristem and inflorescence meristem, on the adaxial sides of developing floral organs and in developing ovules in the region where the integuments emerge.

The protein localises to the membrane. Plays a role in regulating directional growth at the meristem/organ boundary. Is required for the promotion of leaf and floral organ growth and for the prolongation of the plastochron. Promotes organ growth in a non-cell-autonomous manner and may generate a mobile growth signal distinct from the classical phytohormones that prevents premature arrest of proliferation, until the correct primordium size has been reached. Functions probably in association with CYP78A7 in regulating relative growth of the shoot apical meristem and plant organs. Is required locally in developing ovules to stimulates cell proliferation and promote seed growth. In Arabidopsis thaliana (Mouse-ear cress), this protein is Cytochrome P450 78A5 (CYP78A5).